We begin with the raw amino-acid sequence, 342 residues long: dTDP-3,4-didehydro-2,6-dideoxy-alpha-D-glucose 3-reductase (342 aa).

19–25 (CADIALR) serves as a coordination point for NADP(+). R26 lines the substrate pocket. Residues 44–45 (SR), Y65, L81, and H86 contribute to the NADP(+) site. K104 functions as the Proton donor in the catalytic mechanism. NADP(+) contacts are provided by R172 and D184. Substrate is bound by residues Y243 and S263.

It belongs to the Gfo/Idh/MocA family.

It carries out the reaction dTDP-4-dehydro-2,6-dideoxy-alpha-D-glucose + NADP(+) = dTDP-3,4-didehydro-2,6-dideoxy-alpha-D-glucose + NADPH + H(+). It participates in antibiotic biosynthesis; granaticin biosynthesis. In terms of biological role, involved in the biosynthesis of the 2,6-deoxysugar, dTDP-L-rhodinose, attached to the benzoisochromane quinone chromophore to produce the aglycone antibiotics granaticin and granaticin B. Catalyzes the reduction of the C-3 keto moiety of dTDP-3,4-diketo-2,6-dideoxy-alpha-D-glucose to yield dTDP-4-keto-2,6-dideoxy-alpha-D-glucose. NADPH is the better reductant, however NADH can also be used. This chain is dTDP-3,4-didehydro-2,6-dideoxy-alpha-D-glucose 3-reductase, found in Streptomyces violaceoruber.